The primary structure comprises 512 residues: Plastidal glycolate/glycerate translocator 1, chloroplastic (512 aa).

The transit peptide at 1 to 76 (MATLLATPIF…MNFERKLSVQ (76 aa)) directs the protein to the chloroplast. Ala-77 carries the N-acetylalanine modification. Transmembrane regions (helical) follow at residues 93 to 113 (VIAI…DYFL), 127 to 147 (ALFG…VVPA), 160 to 180 (FLFI…VLPL), 195 to 215 (YIVA…AIAV), 238 to 258 (LELW…LFYP), 270 to 290 (PFLL…PSSI), 293 to 313 (VFHP…AFGY), 336 to 356 (AGDI…FSMF), 367 to 387 (AEIF…TALV), 398 to 418 (TVSI…VSLF), 425 to 445 (LTAA…QVVL), and 480 to 500 (LPFC…LCSV).

This sequence belongs to the CidB/LrgB family. Expressed in leaves, stems and flowers, but not in roots.

The protein resides in the plastid. It is found in the chloroplast membrane. Functionally, glycolate/glycerate transporter required for photorespiration. The protein is Plastidal glycolate/glycerate translocator 1, chloroplastic (PLGG1) of Arabidopsis thaliana (Mouse-ear cress).